A 138-amino-acid polypeptide reads, in one-letter code: Large ribosomal subunit protein bL19 (138 aa).

It belongs to the bacterial ribosomal protein bL19 family.

Its function is as follows. This protein is located at the 30S-50S ribosomal subunit interface and may play a role in the structure and function of the aminoacyl-tRNA binding site. This Leptospira interrogans serogroup Icterohaemorrhagiae serovar copenhageni (strain Fiocruz L1-130) protein is Large ribosomal subunit protein bL19.